The primary structure comprises 715 residues: Fatty acid oxidation complex subunit alpha (715 aa).

An enoyl-CoA hydratase region spans residues 8-197; sequence NSQPSAFSLT…NLGLVEEAVP (190 aa). The tract at residues 313–715 is 3-hydroxyacyl-CoA dehydrogenase; sequence ATIKKVGVLG…MANEEQSFYS (403 aa).

This sequence in the N-terminal section; belongs to the enoyl-CoA hydratase/isomerase family. In the central section; belongs to the 3-hydroxyacyl-CoA dehydrogenase family. As to quaternary structure, heterotetramer of two alpha chains (FadJ) and two beta chains (FadI).

The protein resides in the cytoplasm. It catalyses the reaction a (3S)-3-hydroxyacyl-CoA = a (2E)-enoyl-CoA + H2O. The catalysed reaction is a 4-saturated-(3S)-3-hydroxyacyl-CoA = a (3E)-enoyl-CoA + H2O. It carries out the reaction a (3S)-3-hydroxyacyl-CoA + NAD(+) = a 3-oxoacyl-CoA + NADH + H(+). The enzyme catalyses (3S)-3-hydroxybutanoyl-CoA = (3R)-3-hydroxybutanoyl-CoA. It participates in lipid metabolism; fatty acid beta-oxidation. Its function is as follows. Catalyzes the formation of a hydroxyacyl-CoA by addition of water on enoyl-CoA. Also exhibits 3-hydroxyacyl-CoA epimerase and 3-hydroxyacyl-CoA dehydrogenase activities. This Photobacterium profundum (strain SS9) protein is Fatty acid oxidation complex subunit alpha.